We begin with the raw amino-acid sequence, 874 residues long: Alanine--tRNA ligase (874 aa).

Zn(2+) is bound by residues H562, H566, C665, and H669.

The protein belongs to the class-II aminoacyl-tRNA synthetase family. Requires Zn(2+) as cofactor.

The protein localises to the cytoplasm. It carries out the reaction tRNA(Ala) + L-alanine + ATP = L-alanyl-tRNA(Ala) + AMP + diphosphate. In terms of biological role, catalyzes the attachment of alanine to tRNA(Ala) in a two-step reaction: alanine is first activated by ATP to form Ala-AMP and then transferred to the acceptor end of tRNA(Ala). Also edits incorrectly charged Ser-tRNA(Ala) and Gly-tRNA(Ala) via its editing domain. The chain is Alanine--tRNA ligase from Pseudomonas fluorescens (strain ATCC BAA-477 / NRRL B-23932 / Pf-5).